A 240-amino-acid chain; its full sequence is Small ribosomal subunit protein eS4 (240 aa).

In terms of domain architecture, S4 RNA-binding spans 37 to 99 (VPLVVLLRDV…RGEFFRVFPD (63 aa)).

This sequence belongs to the eukaryotic ribosomal protein eS4 family.

This Halorubrum lacusprofundi (strain ATCC 49239 / DSM 5036 / JCM 8891 / ACAM 34) protein is Small ribosomal subunit protein eS4.